We begin with the raw amino-acid sequence, 207 residues long: MKKNMYYAISAPSGTGKSSLIKTFLNTNLGMNFRLSISHTTRNIRSEEIEGKDYFFISKEKFKKMIFEKKFIEYTYSFNNYYGTSFKEVKNKIKSNFSLFFDVNYKGVKKIKEFIPKLISIFILPPSKLDLLKRLYNRYNSNEFELNKRFYKYKKDILNYNKYDFILINRDFNNTLNKIKTIIISKNKKAINQIDKINETIKKLLKK.

The Guanylate kinase-like domain occupies 4-184 (NMYYAISAPS…TLNKIKTIII (181 aa)). 11–18 (APSGTGKS) contributes to the ATP binding site.

This sequence belongs to the guanylate kinase family.

Its subcellular location is the cytoplasm. The enzyme catalyses GMP + ATP = GDP + ADP. Functionally, essential for recycling GMP and indirectly, cGMP. The protein is Guanylate kinase of Wigglesworthia glossinidia brevipalpis.